The sequence spans 454 residues: Bifunctional protein GlmU (454 aa).

Positions 1 to 227 (MTQLSVVILA…FMEVEGANNR (227 aa)) are pyrophosphorylase. Residues 9-12 (LAAG), lysine 23, glutamine 74, 79-80 (GT), 101-103 (YGD), glycine 138, glutamate 152, asparagine 167, and asparagine 225 contribute to the UDP-N-acetyl-alpha-D-glucosamine site. Aspartate 103 provides a ligand contact to Mg(2+). Asparagine 225 is a binding site for Mg(2+). Positions 228-248 (LQLAALERFYQKTQAEKLLLA) are linker. Positions 249–454 (GVRLIDQARF…QGWQRPTKKK (206 aa)) are N-acetyltransferase. UDP-N-acetyl-alpha-D-glucosamine-binding residues include arginine 331 and lysine 349. The active-site Proton acceptor is histidine 361. UDP-N-acetyl-alpha-D-glucosamine contacts are provided by tyrosine 364 and asparagine 375. Acetyl-CoA contacts are provided by residues alanine 378, 384–385 (NY), serine 403, alanine 421, and arginine 438.

In the N-terminal section; belongs to the N-acetylglucosamine-1-phosphate uridyltransferase family. It in the C-terminal section; belongs to the transferase hexapeptide repeat family. Homotrimer. Requires Mg(2+) as cofactor.

Its subcellular location is the cytoplasm. The catalysed reaction is alpha-D-glucosamine 1-phosphate + acetyl-CoA = N-acetyl-alpha-D-glucosamine 1-phosphate + CoA + H(+). The enzyme catalyses N-acetyl-alpha-D-glucosamine 1-phosphate + UTP + H(+) = UDP-N-acetyl-alpha-D-glucosamine + diphosphate. It participates in nucleotide-sugar biosynthesis; UDP-N-acetyl-alpha-D-glucosamine biosynthesis; N-acetyl-alpha-D-glucosamine 1-phosphate from alpha-D-glucosamine 6-phosphate (route II): step 2/2. It functions in the pathway nucleotide-sugar biosynthesis; UDP-N-acetyl-alpha-D-glucosamine biosynthesis; UDP-N-acetyl-alpha-D-glucosamine from N-acetyl-alpha-D-glucosamine 1-phosphate: step 1/1. The protein operates within bacterial outer membrane biogenesis; LPS lipid A biosynthesis. Catalyzes the last two sequential reactions in the de novo biosynthetic pathway for UDP-N-acetylglucosamine (UDP-GlcNAc). The C-terminal domain catalyzes the transfer of acetyl group from acetyl coenzyme A to glucosamine-1-phosphate (GlcN-1-P) to produce N-acetylglucosamine-1-phosphate (GlcNAc-1-P), which is converted into UDP-GlcNAc by the transfer of uridine 5-monophosphate (from uridine 5-triphosphate), a reaction catalyzed by the N-terminal domain. The protein is Bifunctional protein GlmU of Actinobacillus pleuropneumoniae serotype 7 (strain AP76).